Reading from the N-terminus, the 219-residue chain is 7-cyano-7-deazaguanine synthase (219 aa).

Residue 10–20 (FSGGQDSTTCL) participates in ATP binding. 4 residues coordinate Zn(2+): Cys-188, Cys-196, Cys-199, and Cys-202.

Belongs to the QueC family. It depends on Zn(2+) as a cofactor.

The enzyme catalyses 7-carboxy-7-deazaguanine + NH4(+) + ATP = 7-cyano-7-deazaguanine + ADP + phosphate + H2O + H(+). The protein operates within purine metabolism; 7-cyano-7-deazaguanine biosynthesis. In terms of biological role, catalyzes the ATP-dependent conversion of 7-carboxy-7-deazaguanine (CDG) to 7-cyano-7-deazaguanine (preQ(0)). This Neisseria meningitidis serogroup A / serotype 4A (strain DSM 15465 / Z2491) protein is 7-cyano-7-deazaguanine synthase.